The primary structure comprises 124 residues: Ribonuclease pancreatic (124 aa).

The span at 1–13 (KETAAAKFERQHI) shows a compositional bias: basic and acidic residues. A disordered region spans residues 1–24 (KETAAAKFERQHIDSNPSSVSSSN). Lysine 7 and arginine 10 together coordinate substrate. The Proton acceptor role is filled by histidine 12. The span at 15-24 (SNPSSVSSSN) shows a compositional bias: low complexity. 4 cysteine pairs are disulfide-bonded: cysteine 26–cysteine 84, cysteine 40–cysteine 95, cysteine 58–cysteine 110, and cysteine 65–cysteine 72. Asparagine 34 carries N-linked (GlcNAc...) asparagine; partial glycosylation. Substrate is bound by residues 41–45 (KPVNT), lysine 66, and arginine 85. Catalysis depends on histidine 119, which acts as the Proton donor.

It belongs to the pancreatic ribonuclease family. Monomer. Interacts with and forms tight 1:1 complexes with RNH1. Dimerization of two such complexes may occur. Interaction with RNH1 inhibits this protein. In terms of tissue distribution, pancreas.

Its subcellular location is the secreted. It catalyses the reaction an [RNA] containing cytidine + H2O = an [RNA]-3'-cytidine-3'-phosphate + a 5'-hydroxy-ribonucleotide-3'-[RNA].. The catalysed reaction is an [RNA] containing uridine + H2O = an [RNA]-3'-uridine-3'-phosphate + a 5'-hydroxy-ribonucleotide-3'-[RNA].. Its function is as follows. Endonuclease that catalyzes the cleavage of RNA on the 3' side of pyrimidine nucleotides. Acts on single-stranded and double-stranded RNA. In Antilocapra americana (Pronghorn), this protein is Ribonuclease pancreatic (RNASE1).